A 216-amino-acid polypeptide reads, in one-letter code: Probable transaldolase (216 aa).

Catalysis depends on K83, which acts as the Schiff-base intermediate with substrate.

It belongs to the transaldolase family. Type 3B subfamily.

The protein resides in the cytoplasm. The catalysed reaction is D-sedoheptulose 7-phosphate + D-glyceraldehyde 3-phosphate = D-erythrose 4-phosphate + beta-D-fructose 6-phosphate. It participates in carbohydrate degradation; pentose phosphate pathway; D-glyceraldehyde 3-phosphate and beta-D-fructose 6-phosphate from D-ribose 5-phosphate and D-xylulose 5-phosphate (non-oxidative stage): step 2/3. Functionally, transaldolase is important for the balance of metabolites in the pentose-phosphate pathway. In Symbiobacterium thermophilum (strain DSM 24528 / JCM 14929 / IAM 14863 / T), this protein is Probable transaldolase.